A 439-amino-acid chain; its full sequence is Methylenetetrahydrofolate--tRNA-(uracil-5-)-methyltransferase TrmFO (439 aa).

Residue 7–12 (GAGLAG) coordinates FAD.

It belongs to the MnmG family. TrmFO subfamily. FAD is required as a cofactor.

It is found in the cytoplasm. It carries out the reaction uridine(54) in tRNA + (6R)-5,10-methylene-5,6,7,8-tetrahydrofolate + NADH + H(+) = 5-methyluridine(54) in tRNA + (6S)-5,6,7,8-tetrahydrofolate + NAD(+). The enzyme catalyses uridine(54) in tRNA + (6R)-5,10-methylene-5,6,7,8-tetrahydrofolate + NADPH + H(+) = 5-methyluridine(54) in tRNA + (6S)-5,6,7,8-tetrahydrofolate + NADP(+). Its function is as follows. Catalyzes the folate-dependent formation of 5-methyl-uridine at position 54 (M-5-U54) in all tRNAs. The polypeptide is Methylenetetrahydrofolate--tRNA-(uracil-5-)-methyltransferase TrmFO (Heliobacterium modesticaldum (strain ATCC 51547 / Ice1)).